Here is a 199-residue protein sequence, read N- to C-terminus: Large ribosomal subunit protein bL25 (199 aa).

It belongs to the bacterial ribosomal protein bL25 family. CTC subfamily. As to quaternary structure, part of the 50S ribosomal subunit; part of the 5S rRNA/L5/L18/L25 subcomplex. Contacts the 5S rRNA. Binds to the 5S rRNA independently of L5 and L18.

In terms of biological role, this is one of the proteins that binds to the 5S RNA in the ribosome where it forms part of the central protuberance. This chain is Large ribosomal subunit protein bL25, found in Rickettsia akari (strain Hartford).